The primary structure comprises 198 residues: MIISAKFITSLVKFDENLSSNFSEVAFLGRSNVGKSSLINSLCKQKNLAKSSATPGKTQLINFFEVICRRNEEKFNINFIDLPGFGYAKVSKNLKEIWNQNLDEFLKLRTSIKLFIHLIDSRHTHLEIDVNLNDYLKRFLRPDQKILKVFTKCDKLNQSEKAKLKNEFKDSILVSNLNKFGLDSLEDIIINQTLGLDK.

The EngB-type G domain maps to 21–195; sequence NFSEVAFLGR…EDIIINQTLG (175 aa). GTP contacts are provided by residues 29 to 36, 56 to 60, 81 to 84, 151 to 154, and 174 to 176; these read GRSNVGKS, GKTQL, DLPG, TKCD, and VSN. 2 residues coordinate Mg(2+): serine 36 and threonine 58.

Belongs to the TRAFAC class TrmE-Era-EngA-EngB-Septin-like GTPase superfamily. EngB GTPase family. It depends on Mg(2+) as a cofactor.

In terms of biological role, necessary for normal cell division and for the maintenance of normal septation. In Campylobacter jejuni subsp. jejuni serotype O:2 (strain ATCC 700819 / NCTC 11168), this protein is Probable GTP-binding protein EngB.